The sequence spans 1196 residues: DNA-directed RNA polymerase subunit beta (1196 aa).

This sequence belongs to the RNA polymerase beta chain family. The RNAP catalytic core consists of 2 alpha, 1 beta, 1 beta' and 1 omega subunit. When a sigma factor is associated with the core the holoenzyme is formed, which can initiate transcription.

The catalysed reaction is RNA(n) + a ribonucleoside 5'-triphosphate = RNA(n+1) + diphosphate. Functionally, DNA-dependent RNA polymerase catalyzes the transcription of DNA into RNA using the four ribonucleoside triphosphates as substrates. The sequence is that of DNA-directed RNA polymerase subunit beta from Lactococcus lactis subsp. lactis (strain IL1403) (Streptococcus lactis).